The following is a 221-amino-acid chain: GTP cyclohydrolase 1 (221 aa).

Residues Cys109, His112, and Cys180 each coordinate Zn(2+).

Belongs to the GTP cyclohydrolase I family. Toroid-shaped homodecamer, composed of two pentamers of five dimers.

The catalysed reaction is GTP + H2O = 7,8-dihydroneopterin 3'-triphosphate + formate + H(+). The protein operates within cofactor biosynthesis; 7,8-dihydroneopterin triphosphate biosynthesis; 7,8-dihydroneopterin triphosphate from GTP: step 1/1. The polypeptide is GTP cyclohydrolase 1 (Serratia proteamaculans (strain 568)).